Reading from the N-terminus, the 298-residue chain is GTP cyclohydrolase FolE2 (298 aa).

It belongs to the GTP cyclohydrolase IV family.

It catalyses the reaction GTP + H2O = 7,8-dihydroneopterin 3'-triphosphate + formate + H(+). It participates in cofactor biosynthesis; 7,8-dihydroneopterin triphosphate biosynthesis; 7,8-dihydroneopterin triphosphate from GTP: step 1/1. Functionally, converts GTP to 7,8-dihydroneopterin triphosphate. This chain is GTP cyclohydrolase FolE2, found in Xylella fastidiosa (strain M23).